The chain runs to 271 residues: Mannosyl-3-phosphoglycerate phosphatase (271 aa).

D13 serves as the catalytic Nucleophile. D13, D15, and D214 together coordinate Mg(2+).

The protein belongs to the HAD-like hydrolase superfamily. MPGP family. Mg(2+) serves as cofactor.

It is found in the cytoplasm. It carries out the reaction 2-O-(alpha-D-mannosyl)-3-phosphoglycerate + H2O = (2R)-2-O-(alpha-D-mannosyl)-glycerate + phosphate. The chain is Mannosyl-3-phosphoglycerate phosphatase from Escherichia coli O17:K52:H18 (strain UMN026 / ExPEC).